The chain runs to 449 residues: Na(+)/H(+) antiporter NhaA 1 (449 aa).

The next 11 membrane-spanning stretches (helical) occupy residues 32–52, 87–107, 114–134, 145–165, 174–194, 202–222, 233–253, 318–338, 347–367, 382–402, and 417–437; these read IEATSGAVLLLATVVALTLSN, GLMTLFFFIVALEIKREVVLG, MVAFSVVAAAGGMLVPMGLYL, GWGVVMPTDTAFVIGCLALLG, VFLLSLAVVDDLAAILVVAVG, TALALGAVGLVIIRGMALLGV, AIIWLAVNASGIHATIVGVIL, WVAFGVMPLFALANAGVSITI, LAVMAGFVLGKPIGVTAFAWL, WGGLVGGALLTGIGFTMALFI, and LGILAASVVSSVAGLTLLCMF.

It belongs to the NhaA Na(+)/H(+) (TC 2.A.33) antiporter family.

It localises to the cell inner membrane. The catalysed reaction is Na(+)(in) + 2 H(+)(out) = Na(+)(out) + 2 H(+)(in). Its function is as follows. Na(+)/H(+) antiporter that extrudes sodium in exchange for external protons. This chain is Na(+)/H(+) antiporter NhaA 1, found in Acidiphilium cryptum (strain JF-5).